The sequence spans 216 residues: DNA-directed RNA polymerase subunit alpha (216 aa).

Belongs to the RNA polymerase alpha chain family. In plastids the minimal PEP RNA polymerase catalytic core is composed of four subunits: alpha, beta, beta', and beta''. When a (nuclear-encoded) sigma factor is associated with the core the holoenzyme is formed, which can initiate transcription.

The protein resides in the plastid. The protein localises to the chloroplast. It carries out the reaction RNA(n) + a ribonucleoside 5'-triphosphate = RNA(n+1) + diphosphate. Functionally, DNA-dependent RNA polymerase catalyzes the transcription of DNA into RNA using the four ribonucleoside triphosphates as substrates. This is DNA-directed RNA polymerase subunit alpha (rpoA) from Euglena gracilis.